The chain runs to 375 residues: Type II restriction enzyme ApaLI (375 aa).

It carries out the reaction Endonucleolytic cleavage of DNA to give specific double-stranded fragments with terminal 5'-phosphates.. A subtype P restriction enzyme that recognizes the double-stranded sequence 5'-GTGCAC-3' and cleaves after G-1. In Acetobacter pasteurianus (Acetobacter turbidans), this protein is Type II restriction enzyme ApaLI.